A 251-amino-acid polypeptide reads, in one-letter code: MPLQNVKVADEGTVNFQKVKEECITAVESLHKVVACYRHLVLTIGGSSDSIHLRDELRRTRERAQELAVCNRNKLTTALRDKKLSKKDCEELERLWVEFSSCLELFHNDMCKVYELATALPHSSTNQPAIQTGSTGNTSAIASRALNVQNINYSDSPANKASLEYQEIEEEILKVDNMITDMEMKVNVLRWTVEANTRMNDELKSTHDSSSVVLLSEEESNSKGCCSDGQLIVSLLLCGTALVAITLYSIL.

Topologically, residues 1–230 are cytoplasmic; the sequence is MPLQNVKVAD…NSKGCCSDGQ (230 aa). Coiled coils occupy residues 53-94 and 158-187; these read LRDE…ELER and ANKASLEYQEIEEEILKVDNMITDMEMKVN. A helical; Anchor for type IV membrane protein membrane pass occupies residues 231 to 250; that stretch reads LIVSLLLCGTALVAITLYSI. Leu-251 is a topological domain (extracellular).

The protein belongs to the RGS7BP/RGS9BP family.

The protein localises to the membrane. Regulator of G protein-coupled receptor (GPCR) signaling. Probably acts by regulating the activity of some 'R7' family protein (RGS6, RGS7, RGS9 and/or RGS11). The protein is Regulator of G-protein signaling 9-binding protein C (rgs9bp-c) of Xenopus laevis (African clawed frog).